A 536-amino-acid chain; its full sequence is CTP synthase (536 aa).

The segment at 1–268 (MSFKSIFLTG…VDFLLSKFGF (268 aa)) is amidoligase domain. S14 contacts CTP. Position 14 (S14) interacts with UTP. Residue 15–20 (SLGKGL) coordinates ATP. Y55 contributes to the L-glutamine binding site. An ATP-binding site is contributed by D72. Residues D72 and E142 each contribute to the Mg(2+) site. CTP-binding positions include 149-151 (DIE), 188-193 (KTKPTQ), and K224. Residues 188–193 (KTKPTQ) and K224 each bind UTP. The Glutamine amidotransferase type-1 domain occupies 294–532 (RIGLVGKYLE…LSAALDYSLE (239 aa)). Residue G353 coordinates L-glutamine. C380 (nucleophile; for glutamine hydrolysis) is an active-site residue. Residues 381–384 (LGMQ), E404, and R460 each bind L-glutamine. Residues H505 and E507 contribute to the active site.

The protein belongs to the CTP synthase family. As to quaternary structure, homotetramer.

It catalyses the reaction UTP + L-glutamine + ATP + H2O = CTP + L-glutamate + ADP + phosphate + 2 H(+). The enzyme catalyses L-glutamine + H2O = L-glutamate + NH4(+). The catalysed reaction is UTP + NH4(+) + ATP = CTP + ADP + phosphate + 2 H(+). The protein operates within pyrimidine metabolism; CTP biosynthesis via de novo pathway; CTP from UDP: step 2/2. Its activity is regulated as follows. Allosterically activated by GTP, when glutamine is the substrate; GTP has no effect on the reaction when ammonia is the substrate. The allosteric effector GTP functions by stabilizing the protein conformation that binds the tetrahedral intermediate(s) formed during glutamine hydrolysis. Inhibited by the product CTP, via allosteric rather than competitive inhibition. Functionally, catalyzes the ATP-dependent amination of UTP to CTP with either L-glutamine or ammonia as the source of nitrogen. Regulates intracellular CTP levels through interactions with the four ribonucleotide triphosphates. In Chlamydia muridarum (strain MoPn / Nigg), this protein is CTP synthase.